Reading from the N-terminus, the 402-residue chain is Argininosuccinate synthase (402 aa).

ATP-binding positions include alanine 13 to serine 21 and alanine 40. Residues tyrosine 91 and serine 96 each coordinate L-citrulline. Glycine 121 is a binding site for ATP. Positions 123, 127, and 128 each coordinate L-aspartate. Asparagine 127 lines the L-citrulline pocket. Arginine 131, serine 180, serine 189, glutamate 265, and tyrosine 277 together coordinate L-citrulline.

This sequence belongs to the argininosuccinate synthase family. Type 1 subfamily. As to quaternary structure, homotetramer.

The protein resides in the cytoplasm. The catalysed reaction is L-citrulline + L-aspartate + ATP = 2-(N(omega)-L-arginino)succinate + AMP + diphosphate + H(+). It participates in amino-acid biosynthesis; L-arginine biosynthesis; L-arginine from L-ornithine and carbamoyl phosphate: step 2/3. This chain is Argininosuccinate synthase, found in Leptospira biflexa serovar Patoc (strain Patoc 1 / Ames).